Here is a 372-residue protein sequence, read N- to C-terminus: Septin-1 (372 aa).

The region spanning 27–301 (KGFDFTLMVA…EGYRARCLQS (275 aa)) is the Septin-type G domain. Positions 37-44 (GESGLGKS) are G1 motif. GTP is bound by residues 37–44 (GESGLGKS), threonine 71, glycine 97, and 176–184 (KADALMPQE). A G3 motif region spans residues 94–97 (DTPG). Residues 175–178 (GKAD) form a G4 motif region. Serine 211 bears the Phosphoserine mark. Positions 234 and 250 each coordinate GTP. Serine 253 is modified (phosphoserine; by AURKB). Threonine 256 is modified (phosphothreonine). Phosphoserine; by AURKB is present on residues serine 312 and serine 320. The segment at 352–372 (LEKMQAQMQQSQAQGEQSDAL) is disordered. Low complexity predominate over residues 355 to 372 (MQAQMQQSQAQGEQSDAL).

Belongs to the TRAFAC class TrmE-Era-EngA-EngB-Septin-like GTPase superfamily. Septin GTPase family. In terms of assembly, septins polymerize into heterooligomeric protein complexes that form filaments, and can associate with cellular membranes, actin filaments and microtubules. GTPase activity is required for filament formation. Interacts with AURKB. Expressed at high levels in lymphoid and hematopoietic tissues.

It is found in the cytoplasm. The protein localises to the cytoskeleton. The protein resides in the microtubule organizing center. It localises to the centrosome. Its subcellular location is the midbody. In terms of biological role, filament-forming cytoskeletal GTPase. May play a role in cytokinesis (Potential). This chain is Septin-1, found in Homo sapiens (Human).